Reading from the N-terminus, the 354-residue chain is Alkanal monooxygenase alpha chain (354 aa).

The protein belongs to the bacterial luciferase oxidoreductase family. Heterodimer of an alpha and a beta chain.

The enzyme catalyses a long-chain fatty aldehyde + FMNH2 + O2 = a long-chain fatty acid + hnu + FMN + H2O + 2 H(+). Its function is as follows. Light-emitting reaction in luminous bacteria. This is Alkanal monooxygenase alpha chain (luxA) from Photobacterium leiognathi.